A 37-amino-acid polypeptide reads, in one-letter code: Potassium channel toxin alpha-KTx 4.8 (37 aa).

2 disulfides stabilise this stretch: C13–C33 and C17–C35.

This sequence belongs to the short scorpion toxin superfamily. Potassium channel inhibitor family. Alpha-KTx 04 subfamily. Expressed by the venom gland.

Its subcellular location is the secreted. In terms of biological role, reversible blocker of voltage-gated potassium channel Kv1.2/KCNA2 (Kd=65 nM) and calcium-activated potassium channels KCa2.2/KCNN2 (Kd=575 nM) and KCa3.1/KCNN4 (Kd=59 nM). The polypeptide is Potassium channel toxin alpha-KTx 4.8 (Centruroides margaritatus (Central American bark Scorpion)).